A 429-amino-acid polypeptide reads, in one-letter code: Histidine--tRNA ligase (429 aa).

Belongs to the class-II aminoacyl-tRNA synthetase family. Homodimer.

Its subcellular location is the cytoplasm. The catalysed reaction is tRNA(His) + L-histidine + ATP = L-histidyl-tRNA(His) + AMP + diphosphate + H(+). In Oceanobacillus iheyensis (strain DSM 14371 / CIP 107618 / JCM 11309 / KCTC 3954 / HTE831), this protein is Histidine--tRNA ligase.